The following is a 583-amino-acid chain: 2-succinyl-5-enolpyruvyl-6-hydroxy-3-cyclohexene-1-carboxylate synthase (583 aa).

This sequence belongs to the TPP enzyme family. MenD subfamily. In terms of assembly, homodimer. Mg(2+) serves as cofactor. It depends on Mn(2+) as a cofactor. The cofactor is thiamine diphosphate.

The enzyme catalyses isochorismate + 2-oxoglutarate + H(+) = 5-enolpyruvoyl-6-hydroxy-2-succinyl-cyclohex-3-ene-1-carboxylate + CO2. The protein operates within quinol/quinone metabolism; 1,4-dihydroxy-2-naphthoate biosynthesis; 1,4-dihydroxy-2-naphthoate from chorismate: step 2/7. Its pathway is quinol/quinone metabolism; menaquinone biosynthesis. Its function is as follows. Catalyzes the thiamine diphosphate-dependent decarboxylation of 2-oxoglutarate and the subsequent addition of the resulting succinic semialdehyde-thiamine pyrophosphate anion to isochorismate to yield 2-succinyl-5-enolpyruvyl-6-hydroxy-3-cyclohexene-1-carboxylate (SEPHCHC). In Chlorobium phaeovibrioides (strain DSM 265 / 1930) (Prosthecochloris vibrioformis (strain DSM 265)), this protein is 2-succinyl-5-enolpyruvyl-6-hydroxy-3-cyclohexene-1-carboxylate synthase.